The chain runs to 107 residues: Nucleoid-associated protein mlr5504 (107 aa).

It belongs to the YbaB/EbfC family. In terms of assembly, homodimer.

Its subcellular location is the cytoplasm. It is found in the nucleoid. Its function is as follows. Binds to DNA and alters its conformation. May be involved in regulation of gene expression, nucleoid organization and DNA protection. This is Nucleoid-associated protein mlr5504 from Mesorhizobium japonicum (strain LMG 29417 / CECT 9101 / MAFF 303099) (Mesorhizobium loti (strain MAFF 303099)).